The primary structure comprises 212 residues: Protein Thf1 (212 aa).

Positions 179-201 (ERMEQAVELMQETLAADRRKKEK) form a coiled coil.

The protein belongs to the THF1 family.

Functionally, may be involved in photosynthetic membrane biogenesis. The sequence is that of Protein Thf1 from Parasynechococcus marenigrum (strain WH8102).